The sequence spans 481 residues: Beta-1,3-glucan-binding protein (481 aa).

Residues 1 to 17 (MKVLVVFIFCLVRSTFG) form the signal peptide. Residues 19–123 (FEVPDALVEV…QKFVVKQLLD (105 aa)) enclose the CBM39 domain. The GH16 domain maps to 211–481 (HRLTIRPVPS…EVDYVKVSAL (271 aa)). Asparagine 467 is a glycosylation site (N-linked (GlcNAc...) asparagine).

Belongs to the insect beta-1,3-glucan binding protein family. In terms of processing, the N-terminus is blocked. In terms of tissue distribution, hemolymph.

The protein localises to the secreted. Involved in the recognition of invading microorganisms. Binds specifically to beta-1,3-glucan and activates the phenoloxidase cascade. The sequence is that of Beta-1,3-glucan-binding protein (GRP) from Tenebrio molitor (Yellow mealworm beetle).